The chain runs to 820 residues: Penicillin-binding protein 1A (820 aa).

The disordered stretch occupies residues 1-120 (MNSDGRHHQS…PAGRLPQPRV (120 aa)). The span at 41-53 (TDDRSAPHADSIE) shows a compositional bias: basic and acidic residues. A helical transmembrane segment spans residues 139-159 (LTAAVVILLPMVTFTMAYLIV). A transglycosylase region spans residues 180 to 360 (GSEIAKIVPP…RWNWVLDGMV (181 aa)). The Proton donor; for transglycosylase activity role is filled by Glu-213. Positions 453–743 (AVVSIDPHNG…PSDIWKATMD (291 aa)) are transpeptidase. Ser-487 (acyl-ester intermediate; for transpeptidase activity) is an active-site residue. The segment covering 792–804 (ITIPIGPPTTITL) has biased composition (low complexity). Residues 792 to 820 (ITIPIGPPTTITLAPPPPAPPAATPTPPP) are disordered. Over residues 805–820 (APPPPAPPAATPTPPP) the composition is skewed to pro residues.

This sequence in the N-terminal section; belongs to the glycosyltransferase 51 family. The protein in the C-terminal section; belongs to the transpeptidase family. As to quaternary structure, interacts with RipA via its transpeptidase domain (residues 561-820).

Its subcellular location is the cell membrane. The enzyme catalyses [GlcNAc-(1-&gt;4)-Mur2Ac(oyl-L-Ala-gamma-D-Glu-L-Lys-D-Ala-D-Ala)](n)-di-trans,octa-cis-undecaprenyl diphosphate + beta-D-GlcNAc-(1-&gt;4)-Mur2Ac(oyl-L-Ala-gamma-D-Glu-L-Lys-D-Ala-D-Ala)-di-trans,octa-cis-undecaprenyl diphosphate = [GlcNAc-(1-&gt;4)-Mur2Ac(oyl-L-Ala-gamma-D-Glu-L-Lys-D-Ala-D-Ala)](n+1)-di-trans,octa-cis-undecaprenyl diphosphate + di-trans,octa-cis-undecaprenyl diphosphate + H(+). The catalysed reaction is Preferential cleavage: (Ac)2-L-Lys-D-Ala-|-D-Ala. Also transpeptidation of peptidyl-alanyl moieties that are N-acyl substituents of D-alanine.. It participates in cell wall biogenesis; peptidoglycan biosynthesis. Cell wall formation. Synthesis of cross-linked peptidoglycan from the lipid intermediates. The enzyme has a penicillin-insensitive transglycosylase N-terminal domain (formation of linear glycan strands) and a penicillin-sensitive transpeptidase C-terminal domain (cross-linking of the peptide subunits). Has little peptidoglycan hydrolytic activity; however it inhibits the synergistic peptidoglycan hydrolysis of RipA plus RpfB. The protein is Penicillin-binding protein 1A (ponA1) of Mycobacterium tuberculosis (strain ATCC 25618 / H37Rv).